Consider the following 739-residue polypeptide: Nucleoprotein (739 aa).

A coiled-coil region spans residues 334 to 363 (VNVGEQYQQLREAATEAEKQLQQYAESREL). Disordered stretches follow at residues 414 to 475 (RPNL…YHDD) and 498 to 642 (FELQ…IGQS). Residues 570–579 (TPIDQGDDDP) show a composition bias toward acidic residues. Residues 614–624 (AEAHEPPHKSS) are compositionally biased toward basic and acidic residues. The segment covering 625–634 (NEPAETSQLN) has biased composition (polar residues).

This sequence belongs to the filoviruses nucleoprotein family. As to quaternary structure, homooligomer. Homomultimerizes to form the nucleocapsid. Binds to viral genomic RNA. Interacts with VP35 and VP30 to form the nucleocapsid. Interacts with host PPP2R5C; this interaction leads to VP30 dephosphorylation and viral transcription. Interacts with VP24; this interaction facilitates nucleocapsid assembly and genome packaging. Interacts with matrix protein VP40; this interaction allows recruitment of the nucleocapsid into progeny virions. Interacts with host STAU1. Interacts with host NXF1 (via RNA-binding domain); this interaction recruits NXF1 to the inclusion bodies were viral replication takes place, probably to export viral mRNA-NXF1 complexes from these sites. Interacts with host CCDC92; this interaction sequesters NP in the host cytoplasm. Interacts with host TRIM14. Post-translationally, phosphorylated and O-glycosylated by host. Acetylated by host EP300 in vitro.

The protein localises to the virion. The protein resides in the host cytoplasm. Functionally, oligomerizes into helical capsid to encapsidate the viral genome, protecting it from nucleases and the cellular innate immune response. VP35 binds to and stabilizes monomeric NP, keeping it soluble. Upon virus replication, NP is recruited to bind cooperatively viral genomic RNA and VP35 is released. The encapsidated genomic RNA is termed the nucleocapsid and serves as template for transcription and replication. The nucleocapsid is helical with a pitch of 10.81 NP per turn and a diameter of about 22nm. Each NP binds to six nucleotides of viral genomic RNA, three being exposed to the solvant and three hidden into the nucleocapsid. Also recruits host PPP2R5C phosphatase to dephosphorylate VP30 and thereby promote viral transcription. Upon virion assembly and budding, NP binds to VP24 and possibly host STAU1. The sequence is that of Nucleoprotein (NP) from Homo sapiens (Human).